Reading from the N-terminus, the 486-residue chain is UDP-N-acetylmuramate--L-alanine ligase (486 aa).

An ATP-binding site is contributed by 126 to 132; that stretch reads GTHGKTS.

Belongs to the MurCDEF family.

The protein resides in the cytoplasm. It catalyses the reaction UDP-N-acetyl-alpha-D-muramate + L-alanine + ATP = UDP-N-acetyl-alpha-D-muramoyl-L-alanine + ADP + phosphate + H(+). It participates in cell wall biogenesis; peptidoglycan biosynthesis. In terms of biological role, cell wall formation. In Corynebacterium glutamicum (strain R), this protein is UDP-N-acetylmuramate--L-alanine ligase.